We begin with the raw amino-acid sequence, 198 residues long: Putative glutathione S-transferase alpha-5 (198 aa).

One can recognise a GST N-terminal domain in the interval 2-78 (TKPTLTYFPV…YISEKHDFRG (77 aa)). Residues Y8, R42, 49 to 50 (QL), and 62 to 63 (QT) each bind glutathione. Residues 80-198 (TKEERARAHQ…YLESRPQSNF (119 aa)) form the GST C-terminal domain.

It belongs to the GST superfamily. Alpha family.

It catalyses the reaction RX + glutathione = an S-substituted glutathione + a halide anion + H(+). Its function is as follows. Conjugation of reduced glutathione to a wide number of exogenous and endogenous hydrophobic electrophiles. The chain is Putative glutathione S-transferase alpha-5 (gsta5) from Dictyostelium discoideum (Social amoeba).